Reading from the N-terminus, the 217-residue chain is MRHEQARQAAAQPQGRYVLPNIIEKTSRGEYGMDPYSKLLKERIVFLGVQIDDVSANDVMAQLLFLESEDPDRDISIYINSPGGSFTSLTAIYDTMQFVRPDISTICMGQAASAAAVLLAAGTPGKRFALENSRILIHQPSAQGEGQSSDIEIQAREILRMRSLLERMLAVHTGKKEEDIRKDIERDKIFSADEAKEYGLIDEVIKTRKSSRLATAR.

The active-site Nucleophile is serine 113. Histidine 138 is an active-site residue.

Belongs to the peptidase S14 family. In terms of assembly, fourteen ClpP subunits assemble into 2 heptameric rings which stack back to back to give a disk-like structure with a central cavity, resembling the structure of eukaryotic proteasomes.

The protein localises to the cytoplasm. It carries out the reaction Hydrolysis of proteins to small peptides in the presence of ATP and magnesium. alpha-casein is the usual test substrate. In the absence of ATP, only oligopeptides shorter than five residues are hydrolyzed (such as succinyl-Leu-Tyr-|-NHMec, and Leu-Tyr-Leu-|-Tyr-Trp, in which cleavage of the -Tyr-|-Leu- and -Tyr-|-Trp bonds also occurs).. In terms of biological role, cleaves peptides in various proteins in a process that requires ATP hydrolysis. Has a chymotrypsin-like activity. Plays a major role in the degradation of misfolded proteins. The chain is ATP-dependent Clp protease proteolytic subunit 2 from Frankia casuarinae (strain DSM 45818 / CECT 9043 / HFP020203 / CcI3).